The primary structure comprises 531 residues: Putative lipase ATG15 (531 aa).

The Cytoplasmic segment spans residues 1-11 (MKPGIKISKRY). Residues 12–31 (SARNASVITVLLLLIYLIYI) form a helical; Signal-anchor for type II membrane protein membrane-spanning segment. The Lumenal segment spans residues 32 to 531 (NKETIQTKYQ…WIGICTEYGI (500 aa)). Residues asparagine 178 and asparagine 207 are each glycosylated (N-linked (GlcNAc...) asparagine). The active-site Charge relay system is the serine 340. Positions 482-513 (VPKKHKSSSSTASSTSAETSTLTVGPSPPEKT) are disordered. Positions 489 to 502 (SSSTASSTSAETST) are enriched in low complexity.

The protein belongs to the AB hydrolase superfamily. Lipase family. As to quaternary structure, binds to both phosphatidylinositol (PI) and phosphatidylinositol 3,5-bisphosphate (PIP2).

It is found in the endosome. The protein resides in the multivesicular body membrane. The protein localises to the prevacuolar compartment membrane. The enzyme catalyses a triacylglycerol + H2O = a diacylglycerol + a fatty acid + H(+). Its function is as follows. Lipase which is essential for lysis of subvacuolar cytoplasm to vacuole targeted bodies and intravacuolar autophagic bodies. Involved in the lysis of intravacuolar multivesicular body (MVB) vesicles. The intravacuolar membrane disintegration by ATG15 is critical to life span extension. The protein is Putative lipase ATG15 (ATG15) of Kluyveromyces lactis (strain ATCC 8585 / CBS 2359 / DSM 70799 / NBRC 1267 / NRRL Y-1140 / WM37) (Yeast).